We begin with the raw amino-acid sequence, 577 residues long: Protein GPR108 (577 aa).

The N-terminal stretch at 1-34 (MAVSERRGLSGESPAQCRWEYLSLLVLMLSGCSG) is a signal peptide. N59 and N111 each carry an N-linked (GlcNAc...) asparagine glycan. The segment at 144-224 (LLPEAPSQSG…TRGPSGKEKD (81 aa)) is disordered. 2 N-linked (GlcNAc...) asparagine glycosylation sites follow: N233 and N237. 7 helical membrane passes run 296–316 (LYLI…SVLC), 325–345 (IHWL…FHSI), 369–389 (LLKG…WAFV), 400–420 (IFGI…VIES), 434–454 (ILFL…VWSI), 482–502 (VMVI…RVAV), and 506–526 (WQWL…VLTG).

The protein belongs to the LU7TM family.

Its subcellular location is the golgi apparatus. The protein localises to the cis-Golgi network membrane. It localises to the trans-Golgi network membrane. It is found in the golgi apparatus membrane. Functionally, may play a role in intracellular immune modulation by activating NF-kappaB response and attenuating Toll-like-receptor response. The protein is Protein GPR108 (Gpr108) of Rattus norvegicus (Rat).